The following is a 158-amino-acid chain: Regenerating islet-derived protein 4 (158 aa).

The signal sequence occupies residues M1–G22. A disulfide bridge connects residues C30 and C41. In terms of domain architecture, C-type lectin spans H37–K155. N-linked (GlcNAc...) asparagine glycosylation is present at N50. 2 disulfide bridges follow: C58–C154 and C129–C146. A carbohydrate contacts are provided by residues D98–Q103 and N135–N137.

Highly expressed in the gastrointestinal tract including the duodenum, jejunum, ileum, ileocecum, appendix, descending colon, pancreas and small intestine. Weakly expressed in normal colon and stomach. Strongly expressed in most colorectal tumors than in normal colon. Preferentially expressed in mucinous tumors and in some cases neuro-endocrine tumors. Expressed in mucus-secreting cells and enterocyte-like cells. In small intestine expressed at the basal perinuclear zone of goblet cells.

The protein localises to the secreted. Functionally, calcium-independent lectin displaying mannose-binding specificity and able to maintain carbohydrate recognition activity in an acidic environment. May be involved in inflammatory and metaplastic responses of the gastrointestinal epithelium. The sequence is that of Regenerating islet-derived protein 4 (REG4) from Homo sapiens (Human).